Consider the following 250-residue polypeptide: ATP synthase subunit a (250 aa).

6 helical membrane-spanning segments follow: residues 29–49 (ASLF…FATS), 84–104 (FFPL…LGMV), 114–134 (IIVT…YGFI), 143–163 (LFVP…IEII), 185–205 (ITLK…ALGI), and 208–228 (AILP…VAFL).

It belongs to the ATPase A chain family. As to quaternary structure, F-type ATPases have 2 components, CF(1) - the catalytic core - and CF(0) - the membrane proton channel. CF(1) has five subunits: alpha(3), beta(3), gamma(1), delta(1), epsilon(1). CF(0) has three main subunits: a(1), b(2) and c(9-12). The alpha and beta chains form an alternating ring which encloses part of the gamma chain. CF(1) is attached to CF(0) by a central stalk formed by the gamma and epsilon chains, while a peripheral stalk is formed by the delta and b chains.

The protein localises to the cell inner membrane. Its function is as follows. Key component of the proton channel; it plays a direct role in the translocation of protons across the membrane. In Rhizobium rhizogenes (strain K84 / ATCC BAA-868) (Agrobacterium radiobacter), this protein is ATP synthase subunit a.